The primary structure comprises 443 residues: ATP-dependent protease ATPase subunit HslU (443 aa).

ATP-binding positions include Ile18, 60 to 65, Asp256, Glu321, and Arg393; that span reads GVGKTE.

The protein belongs to the ClpX chaperone family. HslU subfamily. As to quaternary structure, a double ring-shaped homohexamer of HslV is capped on each side by a ring-shaped HslU homohexamer. The assembly of the HslU/HslV complex is dependent on binding of ATP.

It localises to the cytoplasm. Its function is as follows. ATPase subunit of a proteasome-like degradation complex; this subunit has chaperone activity. The binding of ATP and its subsequent hydrolysis by HslU are essential for unfolding of protein substrates subsequently hydrolyzed by HslV. HslU recognizes the N-terminal part of its protein substrates and unfolds these before they are guided to HslV for hydrolysis. The sequence is that of ATP-dependent protease ATPase subunit HslU from Pasteurella multocida (strain Pm70).